The following is a 306-amino-acid chain: Lipoyl synthase (306 aa).

7 residues coordinate [4Fe-4S] cluster: C41, C46, C52, C68, C72, C75, and S281. The Radical SAM core domain maps to 54–270 (GARRTATFMI…RKVAMDKGFK (217 aa)). The segment at 283–306 (HADEQVNEAAKEKHRLGEEKLQQN) is disordered.

Belongs to the radical SAM superfamily. Lipoyl synthase family. It depends on [4Fe-4S] cluster as a cofactor.

The protein localises to the cytoplasm. The enzyme catalyses [[Fe-S] cluster scaffold protein carrying a second [4Fe-4S](2+) cluster] + N(6)-octanoyl-L-lysyl-[protein] + 2 oxidized [2Fe-2S]-[ferredoxin] + 2 S-adenosyl-L-methionine + 4 H(+) = [[Fe-S] cluster scaffold protein] + N(6)-[(R)-dihydrolipoyl]-L-lysyl-[protein] + 4 Fe(3+) + 2 hydrogen sulfide + 2 5'-deoxyadenosine + 2 L-methionine + 2 reduced [2Fe-2S]-[ferredoxin]. It functions in the pathway protein modification; protein lipoylation via endogenous pathway; protein N(6)-(lipoyl)lysine from octanoyl-[acyl-carrier-protein]. Catalyzes the radical-mediated insertion of two sulfur atoms into the C-6 and C-8 positions of the octanoyl moiety bound to the lipoyl domains of lipoate-dependent enzymes, thereby converting the octanoylated domains into lipoylated derivatives. This chain is Lipoyl synthase, found in Staphylococcus haemolyticus (strain JCSC1435).